The sequence spans 589 residues: Sphingosine-1-phosphate lyase (589 aa).

The Lumenal segment spans residues methionine 1–aspartate 58. Asparagine 6 is a glycosylation site (N-linked (GlcNAc...) asparagine). Residues tyrosine 59 to leucine 76 traverse the membrane as a helical segment. The Cytoplasmic portion of the chain corresponds to lysine 77–lysine 589. Lysine 380 carries the N6-(pyridoxal phosphate)lysine modification.

It belongs to the group II decarboxylase family. Sphingosine-1-phosphate lyase subfamily. Homodimer. Requires pyridoxal 5'-phosphate as cofactor. Post-translationally, glycosylated.

The protein localises to the endoplasmic reticulum membrane. The catalysed reaction is sphinganine 1-phosphate = hexadecanal + phosphoethanolamine. The enzyme catalyses (4R)-hydroxysphinganine 1-phosphate = (2R)-hydroxyhexadecanal + phosphoethanolamine. It participates in lipid metabolism; sphingolipid metabolism. Its function is as follows. Sphingosine-1-phosphate lyase that cleaves phosphorylated sphingoid bases (PSBs), such as sphingosine-1-phosphate, into fatty aldehydes and phosphoethanolamine. Prefers C-16 dihydrosphingosine-l-phosphate (DHS-P) as a substrate. Regulates intracellular levels of sphingolipid long-chain base phosphates (LCBPs). Plays a role in the regulation of global responses to nutrient deprivation in yeast. In Saccharomyces cerevisiae (strain ATCC 204508 / S288c) (Baker's yeast), this protein is Sphingosine-1-phosphate lyase.